Here is a 248-residue protein sequence, read N- to C-terminus: Pulmonary surfactant-associated protein A (248 aa).

The signal sequence occupies residues 1-20 (MSLGSLAFTLFLTVVAGIKC). N21 is a glycosylation site (N-linked (GlcNAc...) asparagine). Residues 28 to 100 (GSPGIPGTPG…PGERGLPGFP (73 aa)) enclose the Collagen-like domain. Residues 28–100 (GSPGIPGTPG…PGERGLPGFP (73 aa)) are disordered. 10 positions are modified to 4-hydroxyproline: P30, P33, P36, P42, P54, P57, P63, P67, P70, and P76. Over residues 42 to 51 (PGRDGRDGIK) the composition is skewed to basic and acidic residues. Residues 54-65 (PGPPGPMGPPGG) are compositionally biased toward pro residues. Low complexity predominate over residues 69-82 (LPGRDGLPGAPGAP). Positions 84-93 (EHGDKGEPGE) are enriched in basic and acidic residues. One can recognise a C-type lectin domain in the interval 132-248 (LSVGDKVFST…LQYRLAICEF (117 aa)). 2 cysteine pairs are disulfide-bonded: C155/C246 and C224/C238. Residue N207 is glycosylated (N-linked (GlcNAc...) asparagine). Residues E215, R217, N234, and D235 each coordinate Ca(2+).

The protein belongs to the SFTPA family. In terms of assembly, oligomeric complex of 6 set of homotrimers.

It is found in the secreted. The protein localises to the extracellular space. The protein resides in the extracellular matrix. It localises to the surface film. In terms of biological role, in presence of calcium ions, it binds to surfactant phospholipids and contributes to lower the surface tension at the air-liquid interface in the alveoli of the mammalian lung and is essential for normal respiration. Enhances the expression of MYO18A/SP-R210 on alveolar macrophages. The sequence is that of Pulmonary surfactant-associated protein A (Sftpa1) from Mus musculus (Mouse).